The primary structure comprises 406 residues: Peptidase T (406 aa).

H78 is a binding site for Zn(2+). D80 is a catalytic residue. A Zn(2+)-binding site is contributed by D139. Catalysis depends on E173, which acts as the Proton acceptor. Residues E174, D196, and H378 each contribute to the Zn(2+) site.

The protein belongs to the peptidase M20B family. Zn(2+) serves as cofactor.

The protein resides in the cytoplasm. It carries out the reaction Release of the N-terminal residue from a tripeptide.. Its function is as follows. Cleaves the N-terminal amino acid of tripeptides. In Clostridium perfringens (strain 13 / Type A), this protein is Peptidase T.